The sequence spans 415 residues: Procollagen C-endopeptidase enhancer 2 (415 aa).

The signal sequence occupies residues 1-23 (MRGANAWAPLCLLLAAATQLSRQ). 7 disulfide bridges follow: Cys33/Cys59, Cys86/Cys107, Cys154/Cys181, Cys208/Cys231, Cys297/Cys364, Cys301/Cys367, and Cys312/Cys415. CUB domains lie at 33–144 (CGGI…FSAA) and 154–268 (CGGL…YIFR). Residues 297–415 (CQQKCRRTGT…LLDALKNKQC (119 aa)) enclose the NTR domain. An N-linked (GlcNAc...) asparagine glycan is attached at Asn355.

In terms of assembly, interacts with heparin with high affinity, and type I or II collagen. O-glycosylated; contains sialic acid. As to expression, highly expressed in the heart, trabecular meshwork, pituitary gland, bladder, mammary gland, trachea and placenta and weakly expressed in the brain. Expressed in cartilage.

It localises to the secreted. Functionally, binds to the C-terminal propeptide of types I and II procollagens and may enhance the cleavage of that propeptide by BMP1. This Homo sapiens (Human) protein is Procollagen C-endopeptidase enhancer 2 (PCOLCE2).